Reading from the N-terminus, the 335-residue chain is tRNA-dihydrouridine(20/20a) synthase (335 aa).

Residues 20–22 and Gln72 contribute to the FMN site; that span reads PML. Cys102 functions as the Proton donor in the catalytic mechanism. Residues Lys141, His173, 213–215, and 235–236 each bind FMN; these read NGG and GR.

Belongs to the Dus family. DusA subfamily. Requires FMN as cofactor.

It catalyses the reaction 5,6-dihydrouridine(20) in tRNA + NADP(+) = uridine(20) in tRNA + NADPH + H(+). The enzyme catalyses 5,6-dihydrouridine(20) in tRNA + NAD(+) = uridine(20) in tRNA + NADH + H(+). The catalysed reaction is 5,6-dihydrouridine(20a) in tRNA + NADP(+) = uridine(20a) in tRNA + NADPH + H(+). It carries out the reaction 5,6-dihydrouridine(20a) in tRNA + NAD(+) = uridine(20a) in tRNA + NADH + H(+). Catalyzes the synthesis of 5,6-dihydrouridine (D), a modified base found in the D-loop of most tRNAs, via the reduction of the C5-C6 double bond in target uridines. Specifically modifies U20 and U20a in tRNAs. The protein is tRNA-dihydrouridine(20/20a) synthase of Shewanella oneidensis (strain ATCC 700550 / JCM 31522 / CIP 106686 / LMG 19005 / NCIMB 14063 / MR-1).